A 1576-amino-acid polypeptide reads, in one-letter code: Calmodulin-regulated spectrin-associated protein 1 (1576 aa).

In terms of domain architecture, Calponin-homology (CH) spans 217 to 332 (ESPSHPKVRY…FIAELFWWFE (116 aa)). 4 disordered regions span residues 415–447 (HPLLPLRQKQQKSVKPEESLNHRDQANSLTRAD), 549–572 (DLELQSVSSRASSQMSTSRLRRPA), 595–653 (KEKH…LESD), and 811–852 (YETK…QNRD). Residues 428 to 439 (VKPEESLNHRDQ) show a composition bias toward basic and acidic residues. Over residues 554 to 566 (SVSSRASSQMSTS) the composition is skewed to low complexity. Residues 595-611 (KEKHMVPKSEEYGEGKQ) are compositionally biased toward basic and acidic residues. 2 stretches are compositionally biased toward polar residues: residues 613–626 (GFSSKRQNEGNQSF) and 642–651 (RTFTPLSSLE). The segment covering 813-824 (TKSSTSSSQKTT) has biased composition (low complexity). Residues 840 to 852 (QRREQSPGRQNRD) are compositionally biased toward basic and acidic residues. Coiled coils occupy residues 857-889 (LASELVQLHMQLEEKRRVIEAQKKKMESLSARQ) and 992-1022 (DVNECDLSIEKLNETISTLQQAIMKISQQQE). 3 disordered regions span residues 1108–1149 (LKSV…RLHN), 1178–1236 (SSRV…ISDD), and 1274–1422 (RLRK…DWEN). Positions 1116 to 1131 (SPSVPTEESPVEVVPE) are enriched in low complexity. Residues 1178-1189 (SSRVAGVSTSES) show a composition bias toward polar residues. 3 stretches are compositionally biased toward basic and acidic residues: residues 1195–1204 (VPVDERHKSS), 1225–1236 (HPEKTKDIISDD), and 1274–1323 (RLRK…KQEQ). The stretch at 1254 to 1315 (ELAKKRAAFL…KARRELIKQE (62 aa)) forms a coiled coil. The span at 1333-1346 (PKPKPKSKKTRPKS) shows a compositional bias: basic residues. A compositionally biased stretch (polar residues) spans 1354–1366 (SDSGTKYSSTPDN). Positions 1367–1382 (LSSAQSGSSLSLASGA) are enriched in low complexity. Residues 1383–1394 (TTEAESVHSGGT) are compositionally biased toward polar residues. Residues 1437 to 1571 (GPKLYKEPSS…QAKRPALPKK (135 aa)) enclose the CKK domain.

It belongs to the CAMSAP1 family.

The protein localises to the cytoplasm. It is found in the cytoskeleton. In terms of biological role, key microtubule-organizing protein that specifically binds the minus-end of non-centrosomal microtubules and regulates their dynamics and organization. Specifically recognizes growing microtubule minus-ends and stabilizes microtubules. Acts on free microtubule minus-ends that are not capped by microtubule-nucleating proteins or other factors and protects microtubule minus-ends from depolymerization. In contrast to camsap2 and camsap3, tracks along the growing tips of minus-end microtubules without significantly affecting the polymerization rate: binds at the very tip of the microtubules minus-end and acts as a minus-end tracking protein (-TIP) that dissociates from microtubules after allowing tubulin incorporation. Through interaction with spectrin may regulate neurite outgrowth. This Xenopus laevis (African clawed frog) protein is Calmodulin-regulated spectrin-associated protein 1 (camsap1).